Reading from the N-terminus, the 174-residue chain is Elongation factor Tu, mitochondrial (174 aa).

GTP is bound at residue 62–66 (DCPGH). The residue at position 78 (lysine 78) is an N6-succinyllysine. Phosphothreonine is present on threonine 103. Phosphoserine is present on serine 121. Lysine 161 bears the N6-acetyllysine mark.

This sequence belongs to the GTP-binding elongation factor family. EF-Tu/EF-1A subfamily.

The protein resides in the mitochondrion. The catalysed reaction is GTP + H2O = GDP + phosphate + H(+). GTP hydrolase that promotes the GTP-dependent binding of aminoacyl-tRNA to the A-site of ribosomes during protein biosynthesis. The chain is Elongation factor Tu, mitochondrial from Mesocricetus auratus (Golden hamster).